The primary structure comprises 185 residues: Signal peptidase I (185 aa).

Topologically, residues 1 to 20 (MKSEKEKTSKKSAVLDWAKA) are cytoplasmic. A helical transmembrane segment spans residues 21 to 41 (IIIAVVLAVLIRNFLFAPYVV). Topologically, residues 42–185 (DGESMEPTLH…FPFNEIRKTK (144 aa)) are extracellular. Active-site residues include S45 and K85.

The protein belongs to the peptidase S26 family.

The protein resides in the cell membrane. The enzyme catalyses Cleavage of hydrophobic, N-terminal signal or leader sequences from secreted and periplasmic proteins.. The sequence is that of Signal peptidase I (sipA) from Bacillus amyloliquefaciens (Bacillus velezensis).